A 1187-amino-acid polypeptide reads, in one-letter code: Carbamoyl phosphate synthase arginine-specific large chain, chloroplastic (1187 aa).

A chloroplast-targeting transit peptide spans 1-62 (MRNHCLELSS…SSSFSTFPPC (62 aa)). The segment at 93-494 (GKRTDLKKIM…SFQKALRSLE (402 aa)) is carboxyphosphate synthetic domain. Residues Arg-220, Arg-261, Gly-267, Gly-268, Lys-300, Leu-302, Glu-307, Gly-333, Val-334, His-335, Gln-377, and Glu-391 each coordinate ATP. Residues 224–420 (KDAMKNIGLK…IAKMAAKLSV (197 aa)) form the ATP-grasp 1 domain. Residues Gln-377, Glu-391, and Asn-393 each coordinate Mg(2+). Positions 495–644 (CGFSGWGCAK…YSSYDVECES (150 aa)) are oligomerization domain. The tract at residues 645–1040 (APNNKKKVLI…SAFAMAQIAA (396 aa)) is carbamoyl phosphate synthetic domain. The region spanning 782-975 (NAILDELKIE…LAKYAALVMS (194 aa)) is the ATP-grasp 2 domain. Arg-818, Lys-857, Leu-859, Glu-864, Gly-890, Val-891, His-892, Ser-893, Gln-933, and Glu-946 together coordinate ATP. Mg(2+) is bound by residues Gln-933, Glu-946, and Asn-948. The tract at residues 1041-1187 (GQKLPLSGTV…EVKNVSSLLV (147 aa)) is allosteric domain. Residues 1042–1183 (QKLPLSGTVF…QDFFEVKNVS (142 aa)) enclose the MGS-like domain.

Belongs to the CarB family. In terms of assembly, heterodimer composed of 2 chains; the small (or glutamine) chain promotes the hydrolysis of glutamine to ammonia, which is used by the large (or ammonia) chain to synthesize carbamoyl phosphate. The cofactor is Mg(2+). Mn(2+) serves as cofactor. Expressed in roots and leaves.

Its subcellular location is the plastid. It is found in the chloroplast. It catalyses the reaction hydrogencarbonate + L-glutamine + 2 ATP + H2O = carbamoyl phosphate + L-glutamate + 2 ADP + phosphate + 2 H(+). The enzyme catalyses hydrogencarbonate + NH4(+) + 2 ATP = carbamoyl phosphate + 2 ADP + phosphate + 2 H(+). It functions in the pathway amino-acid biosynthesis; L-arginine biosynthesis; carbamoyl phosphate from bicarbonate: step 1/1. Its function is as follows. Large subunit of the arginine-specific carbamoyl phosphate synthase (CPSase). CPSase catalyzes the formation of carbamoyl phosphate from the ammonia moiety of glutamine, hydrogencarbonate, and phosphate donated by ATP, constituting the first step of 2 biosynthetic pathways, one leading to arginine and/or urea and the other to pyrimidine nucleotides. The large subunit (synthetase) binds the substrates ammonia (free or transferred from glutamine from the small subunit), hydrogencarbonate and ATP and carries out an ATP-coupled ligase reaction, activating hydrogencarbonate by forming carboxy phosphate which reacts with ammonia to form carbamoyl phosphate. Required for mesophyll development. This Arabidopsis thaliana (Mouse-ear cress) protein is Carbamoyl phosphate synthase arginine-specific large chain, chloroplastic (CARB).